Here is a 215-residue protein sequence, read N- to C-terminus: MSASLINRSLTNIRTELDFLKGSNVISNDVYDQINKSLPAKWDPANAPRNASPASLEYVEALYQFDPQQDGDLGLKPGDKVQLLEKLSPEWYKGSCNGRTGIFPANYVKPAFSGSNGPSNLPPPPQYKAQELQQIPTQNSAASSYQQQPFPPPSTNYYQQPQQQPQQAPPPQQQQQQQQHQSSHSHLKSFGSKLGNAAIFGAGASIGSDIVNNIF.

Position 2 is an N-acetylserine (S2). Residues S52 and S55 each carry the phosphoserine modification. The SH3 domain occupies 54–113; sequence ASLEYVEALYQFDPQQDGDLGLKPGDKVQLLEKLSPEWYKGSCNGRTGIFPANYVKPAFS. Residue K80 forms a Glycyl lysine isopeptide (Lys-Gly) (interchain with G-Cter in ubiquitin) linkage. The disordered stretch occupies residues 114-189; sequence GSNGPSNLPP…HQSSHSHLKS (76 aa). A PY motif motif is present at residues 124–127; it reads PPQY.

This sequence belongs to the LSB1 family. Interacts with LAS17, RSP5 and SUP35. In terms of processing, ubiquitinated by RSP5. Ubiquitination reduces the protein abundance and its prion-inducing ability.

The protein resides in the cytoplasm. It is found in the nucleus. It localises to the cytoskeleton. Its subcellular location is the actin patch. Its function is as follows. Overproduction promotes the de novo induction of the [PSI+] prion form of SUP35. The prion-inducing effect depends on the association with the actin cytoskeleton. Also implicated in prion maintenance during heat stress. In Saccharomyces cerevisiae (strain ATCC 204508 / S288c) (Baker's yeast), this protein is [PSI+] inducibility protein 3 (PIN3).